A 272-amino-acid chain; its full sequence is MSSINGIDNIKFDYEFSNSLYYRNSIFFSIIFFIIYKKSSYITENFFGELVKKAYTTLTEKKKLEWDQRVVSMIHAFLVLPFCIISAVESFKYGDIFYFQNDSLLMVLSISSGYFIWDLIICYKDPKLVGTPMIIHAIMGLSSNIYVALPHGRPCFVPIVAILLITEISTIPLNMKGFIQVVNSKSKYYNWSLGAFVITFLVSRCIIGLPFDIYLVYGCIQRWDVFPMDKSLVFITECGIQFFLNSYWSFLLIKKLYQTYLNPIPNHKKNED.

7 helical membrane-spanning segments follow: residues phenylalanine 16–tyrosine 36, valine 71–phenylalanine 91, serine 103–tyrosine 123, leucine 128–alanine 148, cysteine 155–methionine 175, phenylalanine 196–valine 216, and valine 233–isoleucine 253. The region spanning lysine 61–leucine 261 is the TLC domain.

Belongs to the TLCD4 family.

It localises to the membrane. This is TLC domain-containing protein 4 C (tlcd4c) from Dictyostelium discoideum (Social amoeba).